Consider the following 197-residue polypeptide: HTH-type transcriptional regulator BetI (197 aa).

The 61-residue stretch at 8–68 (PIRRQQLIEA…ATMRYLMNAL (61 aa)) folds into the HTH tetR-type domain. Residues 31-50 (SIALIARLAGVSNGIISHYF) constitute a DNA-binding region (H-T-H motif).

It functions in the pathway amine and polyamine biosynthesis; betaine biosynthesis via choline pathway [regulation]. Functionally, repressor involved in the biosynthesis of the osmoprotectant glycine betaine. It represses transcription of the choline transporter BetT and the genes of BetAB involved in the synthesis of glycine betaine. This Pseudomonas fluorescens (strain SBW25) protein is HTH-type transcriptional regulator BetI.